The following is a 215-amino-acid chain: LysM and putative peptidoglycan-binding domain-containing protein 1 (215 aa).

The 45-residue stretch at 37–81 (LEHQVQPGDTLQGLALRYGVSMEQIKRANRLYTNDSIFLKKSLYI) folds into the LysM domain. Composition is skewed to polar residues over residues 86–103 (GQSD…SETE) and 173–189 (GNRT…QQRS). 2 disordered regions span residues 86–133 (GQSD…PVDF) and 148–203 (AVKK…TRAS).

The sequence is that of LysM and putative peptidoglycan-binding domain-containing protein 1 (lysmd1) from Xenopus laevis (African clawed frog).